A 226-amino-acid chain; its full sequence is uncharacterized protein (226 aa).

This is an uncharacterized protein from Methanocaldococcus jannaschii (strain ATCC 43067 / DSM 2661 / JAL-1 / JCM 10045 / NBRC 100440) (Methanococcus jannaschii).